Consider the following 267-residue polypeptide: MNMSVLTLQEYEFEKQFNENEAIQWMQENWKKSFLFSALYAAFIFGGRHLMNKRAKFELRKPLVLWSLTLAVFSIFGALRTGAYMLYILMTKGLKQSVCDQSFYNGPVSKFWAYAFVLSKAPELGDTIFIILRKQKLIFLHWYHHITVLLYSWYSYKDMVAGGGWFMTMNYGVHAVMYSYYALRAAGFRVSRKFAMFITLSQITQMLMGCVINYLVFNWMQHDNDQCYSHFQNIFWSSLMYLSYLLLFCHFFFEAYIGKVKKATKAE.

N-linked (GlcNAc...) asparagine glycosylation occurs at Asn2. Helical transmembrane passes span 34–51 (FLFS…RHLM), 70–90 (LAVF…YILM), 111–131 (FWAY…IFII), 136–156 (KLIF…WYSY), 159–179 (MVAG…VMYS), 197–217 (FITL…YLVF), and 234–254 (IFWS…FFFE).

This sequence belongs to the ELO family. ELOVL6 subfamily. Post-translationally, N-Glycosylated. As to expression, expressed in liver and barely in brain.

It localises to the endoplasmic reticulum membrane. It carries out the reaction a very-long-chain acyl-CoA + malonyl-CoA + H(+) = a very-long-chain 3-oxoacyl-CoA + CO2 + CoA. The catalysed reaction is hexadecanoyl-CoA + malonyl-CoA + H(+) = 3-oxooctadecanoyl-CoA + CO2 + CoA. It catalyses the reaction (9Z)-hexadecenoyl-CoA + malonyl-CoA + H(+) = 3-oxo-(11Z)-octadecenoyl-CoA + CO2 + CoA. The enzyme catalyses dodecanoyl-CoA + malonyl-CoA + H(+) = 3-oxotetradecanoyl-CoA + CO2 + CoA. It carries out the reaction tetradecanoyl-CoA + malonyl-CoA + H(+) = 3-oxohexadecanoyl-CoA + CO2 + CoA. The catalysed reaction is (9Z)-octadecenoyl-CoA + malonyl-CoA + H(+) = 3-oxo-(11Z)-eicosenoyl-CoA + CO2 + CoA. It catalyses the reaction (9Z,12Z)-octadecadienoyl-CoA + malonyl-CoA + H(+) = (11Z,14Z)-3-oxoicosa-11,14-dienoyl-CoA + CO2 + CoA. The enzyme catalyses (9Z,12Z,15Z)-octadecatrienoyl-CoA + malonyl-CoA + H(+) = (11Z,14Z,17Z)-3-oxoeicosatrienoyl-CoA + CO2 + CoA. Its pathway is lipid metabolism; fatty acid biosynthesis. With respect to regulation, the reaction is stimulated by the presence of HSD17B12, the enzyme catalyzing the second step of the elongation cycle. In terms of biological role, catalyzes the first and rate-limiting reaction of the four reactions that constitute the long-chain fatty acids elongation cycle. This endoplasmic reticulum-bound enzymatic process allows the addition of 2 carbons to the chain of long- and very long-chain fatty acids (VLCFAs) per cycle. Condensing enzyme that elongates fatty acids with 12, 14 and 16 carbons with higher activity toward C16:0 acyl-CoAs. Catalyzes the synthesis of unsaturated C16 long chain fatty acids and, to a lesser extent, C18:0 and those with low desaturation degree. May participate in the production of saturated and monounsaturated VLCFAs of different chain lengths that are involved in multiple biological processes as precursors of membrane lipids and lipid mediators. In Rattus norvegicus (Rat), this protein is Very long chain fatty acid elongase 6.